A 230-amino-acid polypeptide reads, in one-letter code: MDKNSLWQRYVPLVRHEALRLQVRLPASVELDDLLQAGGIGLLNAVERYDRLQGTAFTTYAVQRIRGAMLDELRSRDWAPRSVRRNAREVASAMQKVEQRLGRPATEQEVAQNLDIDLTEYRQILLDTNNSQLFSYDEWREEHGESVEPMLEGHEDANPLQHLLEGNLRQRVIEAIEALPEREKMVLTLYYQEELNLKEIGAVLEVGESRVSQLHSQAIKRLRARLNNDS.

The sigma-70 factor domain-2 stretch occupies residues 6–78 (LWQRYVPLVR…MLDELRSRDW (73 aa)). The Interaction with polymerase core subunit RpoC motif lies at 33–36 (DLLQ). The interval 86 to 156 (NAREVASAMQ…VEPMLEGHED (71 aa)) is sigma-70 factor domain-3. The tract at residues 175–223 (AIEALPEREKMVLTLYYQEELNLKEIGAVLEVGESRVSQLHSQAIKRLR) is sigma-70 factor domain-4. The H-T-H motif DNA-binding region spans 197-216 (LKEIGAVLEVGESRVSQLHS).

The protein belongs to the sigma-70 factor family. FliA subfamily.

Its subcellular location is the cytoplasm. In terms of biological role, sigma factors are initiation factors that promote the attachment of RNA polymerase to specific initiation sites and are then released. This sigma factor controls the expression of flagella-related genes. This is RNA polymerase sigma factor FliA from Yersinia enterocolitica.